A 146-amino-acid polypeptide reads, in one-letter code: Calmodulin-like protein 5 (146 aa).

N-acetylalanine is present on Ala-2. EF-hand domains lie at 8–43, 44–74, 78–113, and 114–146; these read EEEA…TGKN, LSEA…TAAK, AGLE…LGQP, and LPQE…LAQE. The Ca(2+) site is built by Asp-21, Asp-23, Asn-25, Thr-27, Glu-32, Asp-57, Asp-59, Asp-61, Glu-63, Glu-68, Asp-91, Asp-93, Asp-95, His-97, Glu-102, Asp-127, Asp-129, Asp-131, Arg-133, and Glu-138.

As to quaternary structure, associates with transglutaminase 3. In terms of tissue distribution, particularly abundant in the epidermis where its expression is directly related to keratinocyte differentiation. Very low expression in lung.

Binds calcium. May be involved in terminal differentiation of keratinocytes. This is Calmodulin-like protein 5 (CALML5) from Homo sapiens (Human).